The following is a 123-amino-acid chain: Alpha-lactalbumin (123 aa).

The C-type lysozyme domain occupies 1–123; the sequence is KQFTKCELSQ…KLEQWLCEEL (123 aa). 4 disulfides stabilise this stretch: Cys-6/Cys-120, Cys-28/Cys-111, Cys-61/Cys-77, and Cys-73/Cys-91. Residues Lys-79, Asp-82, Asp-84, Asp-87, and Asp-88 each contribute to the Ca(2+) site.

The protein belongs to the glycosyl hydrolase 22 family. In terms of assembly, lactose synthase (LS) is a heterodimer of a catalytic component, beta1,4-galactosyltransferase (beta4Gal-T1) and a regulatory component, alpha-lactalbumin (LA). In terms of tissue distribution, mammary gland specific. Secreted in milk.

It localises to the secreted. Its function is as follows. Regulatory subunit of lactose synthase, changes the substrate specificity of galactosyltransferase in the mammary gland making glucose a good acceptor substrate for this enzyme. This enables LS to synthesize lactose, the major carbohydrate component of milk. In other tissues, galactosyltransferase transfers galactose onto the N-acetylglucosamine of the oligosaccharide chains in glycoproteins. This Equus asinus (Donkey) protein is Alpha-lactalbumin (LALBA).